The primary structure comprises 117 residues: Immunoglobulin kappa variable 1-5 (117 aa).

The first 22 residues, 1-22 (MDMRVPAQLLGLLLLWLPGAKC), serve as a signal peptide directing secretion. A framework-1 region spans residues 23–45 (DIQMTQSPSTLSASVGDRVTITC). The 94-residue stretch at 24–117 (IQMTQSPSTL…YYCQQYNSYS (94 aa)) folds into the Ig-like domain. Residues Cys-45 and Cys-110 are joined by a disulfide bond. Residues 46–56 (RASQSISSWLA) are complementarity-determining-1. The framework-2 stretch occupies residues 57–71 (WYQQKPGKAPKLLIY). The tract at residues 72 to 78 (KASSLES) is complementarity-determining-2. Positions 79–110 (GVPSRFSGSGSGTEFTLTISSLQPDDFATYYC) are framework-3. The complementarity-determining-3 stretch occupies residues 111–117 (QQYNSYS).

Immunoglobulins are composed of two identical heavy chains and two identical light chains; disulfide-linked.

It is found in the secreted. The protein resides in the cell membrane. Functionally, v region of the variable domain of immunoglobulin light chains that participates in the antigen recognition. Immunoglobulins, also known as antibodies, are membrane-bound or secreted glycoproteins produced by B lymphocytes. In the recognition phase of humoral immunity, the membrane-bound immunoglobulins serve as receptors which, upon binding of a specific antigen, trigger the clonal expansion and differentiation of B lymphocytes into immunoglobulins-secreting plasma cells. Secreted immunoglobulins mediate the effector phase of humoral immunity, which results in the elimination of bound antigens. The antigen binding site is formed by the variable domain of one heavy chain, together with that of its associated light chain. Thus, each immunoglobulin has two antigen binding sites with remarkable affinity for a particular antigen. The variable domains are assembled by a process called V-(D)-J rearrangement and can then be subjected to somatic hypermutations which, after exposure to antigen and selection, allow affinity maturation for a particular antigen. The protein is Immunoglobulin kappa variable 1-5 of Homo sapiens (Human).